The sequence spans 247 residues: Probable transcriptional regulatory protein HRM2_04000 (247 aa).

The protein belongs to the TACO1 family.

The protein localises to the cytoplasm. In Desulforapulum autotrophicum (strain ATCC 43914 / DSM 3382 / VKM B-1955 / HRM2) (Desulfobacterium autotrophicum), this protein is Probable transcriptional regulatory protein HRM2_04000.